The chain runs to 1174 residues: Lysylphosphatidylglycerol biosynthesis bifunctional protein LysX (1174 aa).

Residues 1-665 (MGVGLHLTVP…LLHHDGSAPD (665 aa)) are phosphatidylglycerol lysyltransferase. The segment at 9–36 (VPGLRRDGRGVQSNSHDTSSKTTADISR) is disordered. Positions 19–33 (VQSNSHDTSSKTTAD) are enriched in polar residues. Helical transmembrane passes span 82–102 (VPAA…LASV), 124–144 (FPDT…ALTA), 148–168 (IAWL…AAEI), 179–199 (FGEN…VLGY), 216–236 (AVWL…VELF), 274–294 (AIFG…LFLS), and 614–634 (VIPR…LPFS). Positions 666-1174 (VSGLRQVGLT…TLPFPLAKPH (509 aa)) are lysine--tRNA ligase. Residues 728-806 (VSVSGRIMRI…SLIVSGWRLI (79 aa)) constitute a DNA-binding region (OB). Mg(2+) contacts are provided by Asp1086 and Glu1093.

It in the N-terminal section; belongs to the LPG synthetase family. In the C-terminal section; belongs to the class-II aminoacyl-tRNA synthetase family. Mg(2+) is required as a cofactor.

It is found in the cell membrane. The enzyme catalyses tRNA(Lys) + L-lysine + ATP = L-lysyl-tRNA(Lys) + AMP + diphosphate. It catalyses the reaction L-lysyl-tRNA(Lys) + a 1,2-diacyl-sn-glycero-3-phospho-(1'-sn-glycerol) = a 1,2-diacyl-sn-glycero-3-phospho-1'-(3'-O-L-lysyl)-sn-glycerol + tRNA(Lys). Functionally, catalyzes the production of L-lysyl-tRNA(Lys)transfer and the transfer of a lysyl group from L-lysyl-tRNA(Lys) to membrane-bound phosphatidylglycerol (PG), which produces lysylphosphatidylglycerol (LPG), one of the components of the bacterial membrane with a positive net charge. LPG synthesis contributes to the resistance to cationic antimicrobial peptides (CAMPs) and likely protects M.tuberculosis against the CAMPs produced by competiting microorganisms (bacteriocins). In fact, the modification of anionic phosphatidylglycerol with positively charged L-lysine results in repulsion of the peptides. The sequence is that of Lysylphosphatidylglycerol biosynthesis bifunctional protein LysX (lysX) from Mycobacterium tuberculosis (strain KZN 1435 / MDR).